The primary structure comprises 206 residues: Homoserine/homoserine lactone efflux protein (206 aa).

6 helical membrane-spanning segments follow: residues 5–25 (WWFA…SGAI), 45–65 (GLQT…GTLF), 68–88 (SLLA…WLGI), 117–137 (FVNL…PQFI), 148–168 (LILG…YATL), and 182–202 (MKAL…LLAS).

This sequence belongs to the Rht family.

It is found in the cell membrane. Functionally, conducts the efflux of homoserine and homoserine lactone. The sequence is that of Homoserine/homoserine lactone efflux protein (rhtB) from Salmonella typhimurium (strain LT2 / SGSC1412 / ATCC 700720).